The following is a 779-amino-acid chain: Acyl-CoA dehydrogenase family member 11 (779 aa).

Lys-175 carries the N6-acetyllysine modification. Phosphoserine is present on Ser-210. Phosphotyrosine is present on Tyr-323. 2 positions are modified to N6-succinyllysine: Lys-368 and Lys-390. FAD is bound by residues 503-513 (FCMTEPNVSSS), 511-513 (SSS), 537-539 (WSS), and Ser-539. Substrate is bound at residue Ser-513. Residue 628 to 631 (GPGR) participates in substrate binding. FAD contacts are provided by residues Arg-656, Gln-726, and 726–730 (QVHGG). A substrate-binding site is contributed by Gly-754. FAD-binding positions include 755–757 (PDE) and Glu-757. Lys-765 carries the N6-acetyllysine modification.

Belongs to the acyl-CoA dehydrogenase family. In terms of assembly, homodimer. FAD is required as a cofactor.

The protein resides in the peroxisome. It is found in the mitochondrion membrane. It carries out the reaction a 2,3-saturated acyl-CoA + oxidized [electron-transfer flavoprotein] + H(+) = a (2E)-enoyl-CoA + reduced [electron-transfer flavoprotein]. It catalyses the reaction docosanoyl-CoA + oxidized [electron-transfer flavoprotein] + H(+) = (2E)-docosenoyl-CoA + reduced [electron-transfer flavoprotein]. The enzyme catalyses tetracosanoyl-CoA + oxidized [electron-transfer flavoprotein] + H(+) = (2E)-tetracosenoyl-CoA + reduced [electron-transfer flavoprotein]. The catalysed reaction is eicosanoyl-CoA + oxidized [electron-transfer flavoprotein] + H(+) = (2E)-eicosenoyl-CoA + reduced [electron-transfer flavoprotein]. It carries out the reaction hexacosanoyl-CoA + oxidized [electron-transfer flavoprotein] + H(+) = (2E)-hexacosenoyl-CoA + reduced [electron-transfer flavoprotein]. It catalyses the reaction tricosanoyl-CoA + oxidized [electron-transfer flavoprotein] + H(+) = (2E)-tricosenoyl-CoA + reduced [electron-transfer flavoprotein]. The protein operates within lipid metabolism; fatty acid beta-oxidation. Acyl-CoA dehydrogenase, that exhibits maximal activity towards saturated C22-CoA. Probably participates in beta-oxydation and energy production but could also play a role in the metabolism of specific fatty acids to control fatty acids composition of cellular lipids in brain. This is Acyl-CoA dehydrogenase family member 11 (Acad11) from Rattus norvegicus (Rat).